The following is a 250-amino-acid chain: NADH-quinone oxidoreductase subunit C (250 aa).

Belongs to the complex I 30 kDa subunit family. NDH-1 is composed of 14 different subunits. Subunits NuoB, C, D, E, F, and G constitute the peripheral sector of the complex.

It is found in the cell inner membrane. It catalyses the reaction a quinone + NADH + 5 H(+)(in) = a quinol + NAD(+) + 4 H(+)(out). Its function is as follows. NDH-1 shuttles electrons from NADH, via FMN and iron-sulfur (Fe-S) centers, to quinones in the respiratory chain. The immediate electron acceptor for the enzyme in this species is believed to be ubiquinone. Couples the redox reaction to proton translocation (for every two electrons transferred, four hydrogen ions are translocated across the cytoplasmic membrane), and thus conserves the redox energy in a proton gradient. The chain is NADH-quinone oxidoreductase subunit C from Xanthomonas euvesicatoria pv. vesicatoria (strain 85-10) (Xanthomonas campestris pv. vesicatoria).